The primary structure comprises 121 residues: Large ribosomal subunit protein uL14c (121 aa).

The protein belongs to the universal ribosomal protein uL14 family. Part of the 50S ribosomal subunit.

The protein resides in the plastid. The protein localises to the chloroplast. Functionally, binds to 23S rRNA. This Oedogonium cardiacum (Filamentous green alga) protein is Large ribosomal subunit protein uL14c.